The sequence spans 102 residues: Iron-sulfur cluster assembly protein CyaY (102 aa).

It belongs to the frataxin family.

Its function is as follows. Involved in iron-sulfur (Fe-S) cluster assembly. May act as a regulator of Fe-S biogenesis. The polypeptide is Iron-sulfur cluster assembly protein CyaY (Histophilus somni (strain 129Pt) (Haemophilus somnus)).